A 149-amino-acid polypeptide reads, in one-letter code: UPF0260 protein PFL_1499 (149 aa).

It belongs to the UPF0260 family.

The polypeptide is UPF0260 protein PFL_1499 (Pseudomonas fluorescens (strain ATCC BAA-477 / NRRL B-23932 / Pf-5)).